We begin with the raw amino-acid sequence, 484 residues long: Glutamyl-tRNA(Gln) amidotransferase subunit A (484 aa).

Residues K76 and S151 each act as charge relay system in the active site. The active-site Acyl-ester intermediate is S175.

It belongs to the amidase family. GatA subfamily. Heterotrimer of A, B and C subunits.

It carries out the reaction L-glutamyl-tRNA(Gln) + L-glutamine + ATP + H2O = L-glutaminyl-tRNA(Gln) + L-glutamate + ADP + phosphate + H(+). Allows the formation of correctly charged Gln-tRNA(Gln) through the transamidation of misacylated Glu-tRNA(Gln) in organisms which lack glutaminyl-tRNA synthetase. The reaction takes place in the presence of glutamine and ATP through an activated gamma-phospho-Glu-tRNA(Gln). In Cellvibrio japonicus (strain Ueda107) (Pseudomonas fluorescens subsp. cellulosa), this protein is Glutamyl-tRNA(Gln) amidotransferase subunit A.